The primary structure comprises 126 residues: Large ribosomal subunit protein bL12 (126 aa).

It belongs to the bacterial ribosomal protein bL12 family. In terms of assembly, homodimer. Part of the ribosomal stalk of the 50S ribosomal subunit. Forms a multimeric L10(L12)X complex, where L10 forms an elongated spine to which 2 to 4 L12 dimers bind in a sequential fashion. Binds GTP-bound translation factors.

Functionally, forms part of the ribosomal stalk which helps the ribosome interact with GTP-bound translation factors. Is thus essential for accurate translation. This Nocardia farcinica (strain IFM 10152) protein is Large ribosomal subunit protein bL12.